A 441-amino-acid polypeptide reads, in one-letter code: Asparagine--tRNA ligase, mitochondrial (441 aa).

The protein belongs to the class-II aminoacyl-tRNA synthetase family.

It localises to the mitochondrion. The enzyme catalyses tRNA(Asn) + L-asparagine + ATP = L-asparaginyl-tRNA(Asn) + AMP + diphosphate + H(+). In Schizosaccharomyces pombe (strain 972 / ATCC 24843) (Fission yeast), this protein is Asparagine--tRNA ligase, mitochondrial (slm5).